The following is a 177-amino-acid chain: Large ribosomal subunit protein uL6 (177 aa).

It belongs to the universal ribosomal protein uL6 family. In terms of assembly, part of the 50S ribosomal subunit.

Its function is as follows. This protein binds to the 23S rRNA, and is important in its secondary structure. It is located near the subunit interface in the base of the L7/L12 stalk, and near the tRNA binding site of the peptidyltransferase center. In Bartonella bacilliformis (strain ATCC 35685 / KC583 / Herrer 020/F12,63), this protein is Large ribosomal subunit protein uL6.